The following is a 177-amino-acid chain: PLAC8-like protein 1 (177 aa).

Belongs to the cornifelin family.

This is PLAC8-like protein 1 (PLAC8L1) from Homo sapiens (Human).